We begin with the raw amino-acid sequence, 290 residues long: Type II restriction enzyme MjaIII (290 aa).

The protein belongs to the DpnII type II restriction endonuclease family.

It catalyses the reaction Endonucleolytic cleavage of DNA to give specific double-stranded fragments with terminal 5'-phosphates.. Its function is as follows. A P subtype restriction enzyme that recognizes the double-stranded sequence 5'-GATC-3'; the cleavage site is unknown. The sequence is that of Type II restriction enzyme MjaIII (mjaIIIR) from Methanocaldococcus jannaschii (strain ATCC 43067 / DSM 2661 / JAL-1 / JCM 10045 / NBRC 100440) (Methanococcus jannaschii).